A 362-amino-acid chain; its full sequence is MLCVNVELQERRYPILIGSGLLQDERSYPIKRGDRVMIVTNPTVAQFYLDTVIYALEKRGCVVDHVLLPDGEKYKTLESLNLIFTALLQDNHGRDTTIIALGGGVIGDVAGFVAASYQRGVRLIQMPTTLLSQVDSSVGGKTAVNHELGKNMIGAFYQPSMVIIDTLTLNTLPKREVNAGLAEVIKYGAILDYEFFEWLEQHIDELVALHPEALQHCISRCCQIKADVVARDETEKGDRALLNLGHTFGHAIETHLGYGNWLHGEAVSTGMMMAAVLSEELGDISIADVSRLEKLLARANLPTVSPDTMQPEDYLPHMMRDKKVLSGKLRLVLLKSLGQAYVANDTDHTLVLNAIRRCTQTD.

NAD(+)-binding positions include 70-75 (DGEKYK), 104-108 (GVIGD), 128-129 (TT), Lys-141, Lys-150, and 168-171 (TLNT). Zn(2+) is bound by residues Glu-183, His-246, and His-263.

This sequence belongs to the sugar phosphate cyclases superfamily. Dehydroquinate synthase family. Co(2+) serves as cofactor. The cofactor is Zn(2+). It depends on NAD(+) as a cofactor.

The protein resides in the cytoplasm. The enzyme catalyses 7-phospho-2-dehydro-3-deoxy-D-arabino-heptonate = 3-dehydroquinate + phosphate. Its pathway is metabolic intermediate biosynthesis; chorismate biosynthesis; chorismate from D-erythrose 4-phosphate and phosphoenolpyruvate: step 2/7. Catalyzes the conversion of 3-deoxy-D-arabino-heptulosonate 7-phosphate (DAHP) to dehydroquinate (DHQ). This is 3-dehydroquinate synthase from Haemophilus influenzae (strain 86-028NP).